The sequence spans 437 residues: Probable carboxypeptidase HCBG_00059 (437 aa).

Residues 1-20 (MKLSNLAALLSASTVAPVAA) form the signal peptide. N153 carries an N-linked (GlcNAc...) asparagine glycan. D163 provides a ligand contact to Zn(2+). E195 (proton acceptor) is an active-site residue. Residue E196 coordinates Zn(2+). N-linked (GlcNAc...) asparagine glycosylation is present at N346.

This sequence belongs to the peptidase M20A family. It depends on Zn(2+) as a cofactor.

Its subcellular location is the secreted. In Ajellomyces capsulatus (strain G186AR / H82 / ATCC MYA-2454 / RMSCC 2432) (Darling's disease fungus), this protein is Probable carboxypeptidase HCBG_00059.